The sequence spans 265 residues: Dehydrogenase RED2 (265 aa).

The helical transmembrane segment at 6-26 (SFLLSKLFLCIALCTAYVAFS) threads the bilayer. The N-linked (GlcNAc...) asparagine glycan is linked to asparagine 45. A helical membrane pass occupies residues 47-67 (TSTVFGLTIVAIGLSALSSWL). The N-linked (GlcNAc...) asparagine glycan is linked to asparagine 74. Valine 89 lines the NADP(+) pocket. Asparagine 127 is a glycosylation site (N-linked (GlcNAc...) asparagine). 2 residues coordinate NADP(+): aspartate 136 and asparagine 163. Asparagine 176 carries an N-linked (GlcNAc...) asparagine glycan. Serine 216 (proton donor) is an active-site residue. NADP(+) is bound by residues tyrosine 228 and lysine 232. Catalysis depends on tyrosine 228, which acts as the Proton acceptor. The active-site Lowers pKa of active site Tyr is the lysine 232.

It belongs to the short-chain dehydrogenases/reductases (SDR) family.

Its subcellular location is the membrane. It catalyses the reaction a primary alcohol + NAD(+) = an aldehyde + NADH + H(+). It carries out the reaction a secondary alcohol + NAD(+) = a ketone + NADH + H(+). The protein operates within mycotoxin biosynthesis. Its function is as follows. Dehydrogenase; part of the Tox1B locus, one of the 2 loci that mediate the biosynthesis of T-toxin, a family of linear polyketides 37 to 45 carbons in length, of which the major component is 41 carbons, and which leads to high virulence to maize. One of the PKSs (PKS1 or PKS2) could synthesize a precursor, used subsequently by the other PKS as starter unit, to add additional carbons. Variability in the length of the final carbon backbone C35-47 could be achieved by varying the number of condensation cycles, or use of different starter or extender units or might be due to decarboxylation of the penultimate product, catalyzed by DEC1. Additional proteins are required for the biosynthesis of T-toxin, including oxidoreductases RED1, RED2, RED3, LAM1 and OXI1, as well as esterase TOX9. This Cochliobolus heterostrophus (strain C4 / ATCC 48331 / race T) (Southern corn leaf blight fungus) protein is Dehydrogenase RED2.